The chain runs to 452 residues: BUB3-interacting and GLEBS motif-containing protein ZNF207 (452 aa).

The interval 1-92 (MGRKKKKQLK…EGIPEKDMEE (92 aa)) is microtubule-binding region. 2 C2H2-type zinc fingers span residues 11–34 (PWCW…KAKH) and 35–58 (FKCH…MQVH). Disordered stretches follow at residues 99–131 (QKTQ…SFQQ) and 298–330 (STMS…TSAT). A compositionally biased stretch (acidic residues) spans 113-123 (DDSDYDDDDDT). The GLEBS stretch occupies residues 329–361 (ATSKLVHPDEDISLEEKRAQLPKYQRNLPRPGQ).

Interacts (via GLEBS region) with bub3.

The protein localises to the nucleus. It localises to the chromosome. Its subcellular location is the centromere. The protein resides in the kinetochore. It is found in the cytoplasm. The protein localises to the cytoskeleton. It localises to the spindle. Functionally, kinetochore- and microtubule-binding protein that plays a key role in spindle assembly. Znf207/BuGZ is mainly composed of disordered low-complexity regions and undergoes phase transition or coacervation to form temperature-dependent liquid droplets. Coacervation promotes microtubule bundling and concentrates tubulin, promoting microtubule polymerization and assembly of spindle and spindle matrix by concentrating its building blocks. This chain is BUB3-interacting and GLEBS motif-containing protein ZNF207, found in Xenopus laevis (African clawed frog).